Reading from the N-terminus, the 142-residue chain is Deoxyuridine 5'-triphosphate nucleotidohydrolase (142 aa).

Substrate is bound by residues 62 to 64 (RSG), Asn-75, 79 to 81 (TID), and Lys-89.

It belongs to the dUTPase family. It depends on Mg(2+) as a cofactor.

The catalysed reaction is dUTP + H2O = dUMP + diphosphate + H(+). Its pathway is pyrimidine metabolism; dUMP biosynthesis; dUMP from dCTP (dUTP route): step 2/2. In terms of biological role, this enzyme is involved in nucleotide metabolism: it produces dUMP, the immediate precursor of thymidine nucleotides and it decreases the intracellular concentration of dUTP so that uracil cannot be incorporated into DNA. This chain is Deoxyuridine 5'-triphosphate nucleotidohydrolase, found in Nautilia profundicola (strain ATCC BAA-1463 / DSM 18972 / AmH).